Reading from the N-terminus, the 350-residue chain is tRNA pseudouridine synthase D (350 aa).

Phe27 is a substrate binding site. Asp80 functions as the Nucleophile in the catalytic mechanism. A substrate-binding site is contributed by Asn129. Positions 155 to 303 (GVPNYFGVQR…VDTTRRAINL (149 aa)) constitute a TRUD domain. A substrate-binding site is contributed by Phe329.

It belongs to the pseudouridine synthase TruD family.

It catalyses the reaction uridine(13) in tRNA = pseudouridine(13) in tRNA. Functionally, responsible for synthesis of pseudouridine from uracil-13 in transfer RNAs. This chain is tRNA pseudouridine synthase D, found in Proteus mirabilis (strain HI4320).